The following is a 404-amino-acid chain: MERVPNEHGRFGDFGGKFVPETLMLPLEEIEAELDKALADESFKQEYIRILQHYSGRPTPLTFAPNLTRQLGGAKMYLKREDLNHTGAHKINNAIGQALLAKRMGKKKLIAETGAGQHGVAAATVAAHFGMDCIVFMGEEDIKRQELNVFRMKLLGAEVVPVSSGNRTLKDATNEAIRYWVAHCDDHFYMIGSVVGPHPYPKMVREFQRIIGDEAKEQFLACEGKLPDVIVACVGGGSNAIGMFYPFLQDDVRLVGVEAAGKGIDTPYHAATITKGTKGVIHGAMTYLLQDEYGQIVEPYSISAGLDYPGVGPEHAYLASIGRVRYESVTDEEAVAAFRLLAQTEGIIPAIESAHAVAKAVELAQSMSPDETVLICLSGRGDKDVQTMMRHLGAKEGEDVAAIR.

Residue Lys90 is modified to N6-(pyridoxal phosphate)lysine.

Belongs to the TrpB family. In terms of assembly, tetramer of two alpha and two beta chains. It depends on pyridoxal 5'-phosphate as a cofactor.

The enzyme catalyses (1S,2R)-1-C-(indol-3-yl)glycerol 3-phosphate + L-serine = D-glyceraldehyde 3-phosphate + L-tryptophan + H2O. The protein operates within amino-acid biosynthesis; L-tryptophan biosynthesis; L-tryptophan from chorismate: step 5/5. In terms of biological role, the beta subunit is responsible for the synthesis of L-tryptophan from indole and L-serine. The chain is Tryptophan synthase beta chain (trpB) from Geobacillus stearothermophilus (Bacillus stearothermophilus).